The following is a 236-amino-acid chain: Phosphoribosylaminoimidazole-succinocarboxamide synthase (236 aa).

This sequence belongs to the SAICAR synthetase family.

The enzyme catalyses 5-amino-1-(5-phospho-D-ribosyl)imidazole-4-carboxylate + L-aspartate + ATP = (2S)-2-[5-amino-1-(5-phospho-beta-D-ribosyl)imidazole-4-carboxamido]succinate + ADP + phosphate + 2 H(+). Its pathway is purine metabolism; IMP biosynthesis via de novo pathway; 5-amino-1-(5-phospho-D-ribosyl)imidazole-4-carboxamide from 5-amino-1-(5-phospho-D-ribosyl)imidazole-4-carboxylate: step 1/2. The polypeptide is Phosphoribosylaminoimidazole-succinocarboxamide synthase (Lysinibacillus sphaericus (strain C3-41)).